Consider the following 128-residue polypeptide: Fluoride-specific ion channel FluC (128 aa).

4 consecutive transmembrane segments (helical) span residues 5-25 (IVAI…LALA), 35-55 (LGTL…AVVF), 67-87 (LFVI…SVEV), and 96-116 (FGWA…LTAL). Na(+)-binding residues include glycine 75 and threonine 78.

This sequence belongs to the fluoride channel Fluc/FEX (TC 1.A.43) family.

Its subcellular location is the cell inner membrane. The enzyme catalyses fluoride(in) = fluoride(out). Its activity is regulated as follows. Na(+) is not transported, but it plays an essential structural role and its presence is essential for fluoride channel function. Its function is as follows. Fluoride-specific ion channel. Important for reducing fluoride concentration in the cell, thus reducing its toxicity. In Burkholderia ambifaria (strain MC40-6), this protein is Fluoride-specific ion channel FluC.